We begin with the raw amino-acid sequence, 104 residues long: MGTRLKVLRVFKQLQRTRMDVFKDDDIALKAARLKINEEFRKNRNETSEENINEMIKLGSNVETVLRESVLQMEHVGEDKLLLRPRKSLLLENVPYCDEPRKKS.

It belongs to the complex I LYR family. In terms of assembly, interacts with UQCRFS1.

It is found in the mitochondrion matrix. In terms of biological role, assembly factor required for Rieske Fe-S protein UQCRFS1 incorporation into the cytochrome b-c1 (CIII) complex. Functions as a chaperone, binding to this subunit within the mitochondrial matrix and stabilizing it prior to its translocation and insertion into the late CIII dimeric intermediate within the mitochondrial inner membrane. In Tetraodon nigroviridis (Spotted green pufferfish), this protein is Complex III assembly factor LYRM7 (lyrm7).